The sequence spans 71 residues: Biotinylated protein TB7.3 homolog (71 aa).

A Biotinyl-binding domain is found at 2 to 71 (AEDVRAEIVA…QAGDLIAVIS (70 aa)). An N6-biotinyllysine modification is found at Lys37.

The protein is Biotinylated protein TB7.3 homolog of Mycobacterium leprae (strain TN).